Reading from the N-terminus, the 193-residue chain is Thymidine kinase (193 aa).

ATP contacts are provided by residues 9-16 and 87-90; these read STMNAGKS and DEAN. Catalysis depends on Glu-88, which acts as the Proton acceptor. Zn(2+)-binding residues include Cys-145, Cys-147, Cys-182, and His-185.

Belongs to the thymidine kinase family. In terms of assembly, homotetramer.

It localises to the cytoplasm. It carries out the reaction thymidine + ATP = dTMP + ADP + H(+). This is Thymidine kinase from Agrobacterium fabrum (strain C58 / ATCC 33970) (Agrobacterium tumefaciens (strain C58)).